Here is an 81-residue protein sequence, read N- to C-terminus: Large ribosomal subunit protein bL31 (81 aa).

This sequence belongs to the bacterial ribosomal protein bL31 family. Type A subfamily. In terms of assembly, part of the 50S ribosomal subunit.

Binds the 23S rRNA. This Fusobacterium nucleatum subsp. nucleatum (strain ATCC 25586 / DSM 15643 / BCRC 10681 / CIP 101130 / JCM 8532 / KCTC 2640 / LMG 13131 / VPI 4355) protein is Large ribosomal subunit protein bL31 (rpmE).